The sequence spans 74 residues: SPbeta prophage-derived uncharacterized HTH-type transcriptional regulator YopS (74 aa).

The HTH cro/C1-type domain occupies 11 to 66 (IPELCRKKDITINELSEITGIKKQQLSDYNRLVKVDMSIRTAKRIAAALDCNVEDL). The segment at residues 22-41 (INELSEITGIKKQQLSDYNR) is a DNA-binding region (H-T-H motif).

This chain is SPbeta prophage-derived uncharacterized HTH-type transcriptional regulator YopS (yopS), found in Bacillus subtilis (strain 168).